A 173-amino-acid polypeptide reads, in one-letter code: MNMGLFYGSSTCYTEMAAEKIRDIIGPELVTLHNLKDDSPKLMEQYDVLILGIPTWDFGEIQEDWEAVWDQLDDLNLEGKIVALYGLGDQLGYGEWFLDALGMLHDKLSTKGVKFVGYWPTEGYEFTSPKPVIADGQLFVGLALDETNQYDLSDERIQSWCEQILNEMAEHYA.

Residues 3–165 enclose the Flavodoxin-like domain; it reads MGLFYGSSTC…RIQSWCEQIL (163 aa).

It belongs to the flavodoxin family. Requires FMN as cofactor.

Its function is as follows. Low-potential electron donor to a number of redox enzymes. In Escherichia coli O157:H7, this protein is Flavodoxin 2 (fldB).